We begin with the raw amino-acid sequence, 178 residues long: Non-specific lipid transfer protein-like 1 (178 aa).

The signal sequence occupies residues 1–26; sequence MAVAARAAAVACLLVVGLAAVAGVDG. 2 disulfide bridges follow: Cys-50/Cys-68 and Cys-69/Cys-110. Residue Asn-99 is glycosylated (N-linked (GlcNAc...) asparagine). Residue Ala-149 is the site of GPI-anchor amidated alanine attachment. The propeptide at 150 to 178 is removed in mature form; sequence AARSPMASTTAVLVVAAAVAAPLLAFFHF.

Belongs to the plant LTP family. In terms of processing, O-glycosylated on hydroxyprolines; noncontiguous hydroxylproline residues are glycosylated with arabinogalactan. As to expression, expressed in roots, stems, leaves, flowers and seeds.

Its subcellular location is the vacuole. It localises to the aleurone grain membrane. This chain is Non-specific lipid transfer protein-like 1 (LTPL1), found in Oryza sativa subsp. japonica (Rice).